Consider the following 332-residue polypeptide: MSKVTVFGTGSFGTALANVLAENGHQVLMWGKNETTINEINEQHINSKYLKTAELNEDIEATLDIETAVAFADIYLMALPTKAMREVAQTIDSLLSSKKTFIHVAKGIENDTYKRVSEMLEDSISPKHNAGIGVLSGPSHAEEVVIKQPTTVAASSKSESVRQLTQDLFMNDYLRVYTNEDLVGVELGGALKNIIAVASGVISGMGFGDNAKAALMTRGLAEISRLGEKLGANPITFLGLGGIGDLIVTCTSTHSRNYTLGYKLGEGKSLDTALNEMNMVVEGVYTTKSVYHLSKEVNVDMPITTALYKVLFENRPVDESVKDLMGRGKKAE.

Ser11, Phe12, Lys32, and Lys106 together coordinate NADPH. Sn-glycerol 3-phosphate contacts are provided by Lys106, Gly137, and Ser139. Ala141 contacts NADPH. Sn-glycerol 3-phosphate contacts are provided by Lys192, Asp245, Ser255, Arg256, and Asn257. Lys192 acts as the Proton acceptor in catalysis. Residue Arg256 coordinates NADPH. The NADPH site is built by Val280 and Glu282.

This sequence belongs to the NAD-dependent glycerol-3-phosphate dehydrogenase family.

It is found in the cytoplasm. It catalyses the reaction sn-glycerol 3-phosphate + NAD(+) = dihydroxyacetone phosphate + NADH + H(+). The catalysed reaction is sn-glycerol 3-phosphate + NADP(+) = dihydroxyacetone phosphate + NADPH + H(+). The protein operates within membrane lipid metabolism; glycerophospholipid metabolism. In terms of biological role, catalyzes the reduction of the glycolytic intermediate dihydroxyacetone phosphate (DHAP) to sn-glycerol 3-phosphate (G3P), the key precursor for phospholipid synthesis. The protein is Glycerol-3-phosphate dehydrogenase [NAD(P)+] of Staphylococcus saprophyticus subsp. saprophyticus (strain ATCC 15305 / DSM 20229 / NCIMB 8711 / NCTC 7292 / S-41).